Reading from the N-terminus, the 242-residue chain is tRNA1(Val) (adenine(37)-N6)-methyltransferase (242 aa).

It belongs to the methyltransferase superfamily. tRNA (adenine-N(6)-)-methyltransferase family.

The protein localises to the cytoplasm. The enzyme catalyses adenosine(37) in tRNA1(Val) + S-adenosyl-L-methionine = N(6)-methyladenosine(37) in tRNA1(Val) + S-adenosyl-L-homocysteine + H(+). Specifically methylates the adenine in position 37 of tRNA(1)(Val) (anticodon cmo5UAC). The chain is tRNA1(Val) (adenine(37)-N6)-methyltransferase from Mannheimia succiniciproducens (strain KCTC 0769BP / MBEL55E).